A 383-amino-acid polypeptide reads, in one-letter code: GDSL esterase/lipase At1g28610 (383 aa).

An N-terminal signal peptide occupies residues 1–22 (MASLDSLVSFFLSTLFVTIVSS). Ser38 acts as the Nucleophile in catalysis. Asn134, Asn184, and Asn315 each carry an N-linked (GlcNAc...) asparagine glycan. Residues Asp340 and His343 contribute to the active site.

Belongs to the 'GDSL' lipolytic enzyme family.

It is found in the secreted. In Arabidopsis thaliana (Mouse-ear cress), this protein is GDSL esterase/lipase At1g28610.